Consider the following 211-residue polypeptide: MSTNDANFMLFSNINDCSYVSCYCEENVWKLCEQVKKTYPSELPKCYAVFVSNERRTVPLWRQKAGRGDEKLVIWDYHVFFMHNPSPNRCLVFDLDTTLPFPTYFHKYVTETFRSDYALTPEHHRFFRVIPAEKYLAEFSSDRRHMRRPDGSWIKPPPSYPPIQTSASTHSLDDFICMKPGKGPGAVYDLLHFVQQFYKPPDRNIGTKTQN.

Residues C24, H78, and D94 contribute to the active site.

The protein belongs to the NTAQ1 family. Monomer.

It catalyses the reaction N-terminal L-glutaminyl-[protein] + H2O = N-terminal L-glutamyl-[protein] + NH4(+). Its function is as follows. Mediates the side-chain deamidation of N-terminal glutamine residues to glutamate, an important step in N-end rule pathway of protein degradation. Conversion of the resulting N-terminal glutamine to glutamate renders the protein susceptible to arginylation, polyubiquitination and degradation as specified by the N-end rule. Does not act on substrates with internal or C-terminal glutamine and does not act on non-glutamine residues in any position. This is Protein N-terminal glutamine amidohydrolase (tun) from Anopheles gambiae (African malaria mosquito).